The following is a 38-amino-acid chain: Photosystem II reaction center protein Y (38 aa).

Residues 4–22 (TIVVFAPIIAALAWVVFNI) form a helical membrane-spanning segment.

The protein belongs to the PsbY family. In terms of assembly, PSII is composed of 1 copy each of membrane proteins PsbA, PsbB, PsbC, PsbD, PsbE, PsbF, PsbH, PsbI, PsbJ, PsbK, PsbL, PsbM, PsbT, PsbX, PsbY, Psb30/Ycf12, peripheral proteins PsbO, CyanoQ (PsbQ), PsbU, PsbV and a large number of cofactors. It forms dimeric complexes.

It is found in the cellular thylakoid membrane. Its function is as follows. Loosely associated component of the core of photosystem II (PSII), it is not always seen in crystals. PSII is a light-driven water plastoquinone oxidoreductase, using light energy to abstract electrons from H(2)O, generating a proton gradient subsequently used for ATP formation. In Prochlorococcus marinus (strain MIT 9215), this protein is Photosystem II reaction center protein Y.